A 487-amino-acid polypeptide reads, in one-letter code: NADH-quinone oxidoreductase subunit N (487 aa).

13 consecutive transmembrane segments (helical) span residues 7-27, 38-58, 79-99, 111-131, 164-184, 207-227, 238-258, 276-296, 301-321, 328-348, 373-393, 406-426, and 451-471; these read ILGP…LLMV, LVGL…GLGA, YAKA…MVWL, ILVL…DLIA, FVLG…VYGF, LLIG…AVPF, APTP…LTLF, VIIL…IVQT, LMAY…AAGT, VLVY…VILA, AAAM…AGFF, GLFA…FYYL, and VILI…SVVV.

This sequence belongs to the complex I subunit 2 family. As to quaternary structure, NDH-1 is composed of 14 different subunits. Subunits NuoA, H, J, K, L, M, N constitute the membrane sector of the complex.

It is found in the cell inner membrane. It catalyses the reaction a quinone + NADH + 5 H(+)(in) = a quinol + NAD(+) + 4 H(+)(out). In terms of biological role, NDH-1 shuttles electrons from NADH, via FMN and iron-sulfur (Fe-S) centers, to quinones in the respiratory chain. The immediate electron acceptor for the enzyme in this species is believed to be ubiquinone. Couples the redox reaction to proton translocation (for every two electrons transferred, four hydrogen ions are translocated across the cytoplasmic membrane), and thus conserves the redox energy in a proton gradient. The polypeptide is NADH-quinone oxidoreductase subunit N (Rhodospirillum rubrum (strain ATCC 11170 / ATH 1.1.1 / DSM 467 / LMG 4362 / NCIMB 8255 / S1)).